The following is a 414-amino-acid chain: Thyroid hormone receptor beta-B (414 aa).

The segment at 1–59 (MPSSMSVRLFTASAAQRKKIQEGDCCVVLAGKTQGRFILIGAVARVSGYIPSYLDKDEL) is modulating. NR C4-type zinc fingers lie at residues 60 to 80 (CVVC…CEGC) and 98 to 122 (CKYE…FKKC). Residues 60 to 134 (CVVCGDKATG…VGMATDLVLD (75 aa)) constitute a DNA-binding region (nuclear receptor). Residues 170 to 414 (EEWELIQVVT…PPLFLEVFED (245 aa)) form the NR LBD domain.

The protein belongs to the nuclear hormone receptor family. NR1 subfamily.

It localises to the nucleus. Functionally, high affinity receptor for triiodothyronine (T3). The polypeptide is Thyroid hormone receptor beta-B (thrb-b) (Xenopus laevis (African clawed frog)).